The chain runs to 789 residues: Endonuclease MutS2 (789 aa).

334 to 341 is an ATP binding site; that stretch reads GPNTGGKT. The segment at 690-714 is disordered; sequence PEKDIQQSGTGKIMKSKTGDTKSEV. In terms of domain architecture, Smr spans 714–789; the sequence is VDVRGKNLEE…GMGVTIVELK (76 aa).

Belongs to the DNA mismatch repair MutS family. MutS2 subfamily. Homodimer. Binds to stalled ribosomes, contacting rRNA.

Functionally, endonuclease that is involved in the suppression of homologous recombination and thus may have a key role in the control of bacterial genetic diversity. Its function is as follows. Acts as a ribosome collision sensor, splitting the ribosome into its 2 subunits. Detects stalled/collided 70S ribosomes which it binds and splits by an ATP-hydrolysis driven conformational change. Acts upstream of the ribosome quality control system (RQC), a ribosome-associated complex that mediates the extraction of incompletely synthesized nascent chains from stalled ribosomes and their subsequent degradation. Probably generates substrates for RQC. The sequence is that of Endonuclease MutS2 from Alkaliphilus metalliredigens (strain QYMF).